We begin with the raw amino-acid sequence, 340 residues long: Major histocompatibility complex class I-related protein 1 (340 aa).

Residues 1–22 (MGELTAFLLPLIIVLMVKHSNS) form the signal peptide. The interval 23–109 (RTHSLRYFRL…KRLQRHYNHS (87 aa)) is alpha-1. The antigen-binding cleft stretch occupies residues 23 to 201 (RTHSLRYFRL…EYGKDTLQRT (179 aa)). The Extracellular segment spans residues 23-302 (RTHSLRYFRL…QESEAIPLVM (280 aa)). 8-(9H-purin-6-yl)-2-oxa-8-azabicyclo[3.3.1]nona-3,6-diene-4,6-dicarbaldehyde is bound by residues Tyr29 and Arg31. The 5-(2-oxoethylideneamino)-6-(D-ribitylamino)uracil site is built by Arg31, Ser46, and Lys65. 3 residues coordinate 5-(2-oxopropylideneamino)-6-(D-ribitylamino)uracil: Arg31, Ser46, and Lys65. Residues Arg31, Ser46, and Lys65 each coordinate 7-hydroxy-6-methyl-8-(1-D-ribityl)lumazine. The 8-(9H-purin-6-yl)-2-oxa-8-azabicyclo[3.3.1]nona-3,6-diene-4,6-dicarbaldehyde site is built by Lys65 and His80. Lys65 is a binding site for 2-amino-4-oxopteridine-6-carbaldehyde. Lys65 provides a ligand contact to pyridoxal. Asn107 carries an N-linked (GlcNAc...) asparagine glycan. Positions 110–201 (GSHTYQRMIG…EYGKDTLQRT (92 aa)) are alpha-2. Arg116 is a binding site for 8-(9H-purin-6-yl)-2-oxa-8-azabicyclo[3.3.1]nona-3,6-diene-4,6-dicarbaldehyde. 5-(2-oxoethylideneamino)-6-(D-ribitylamino)uracil contacts are provided by Arg116, Tyr174, and Gln175. 5-(2-oxopropylideneamino)-6-(D-ribitylamino)uracil is bound by residues Arg116, Tyr174, and Gln175. The 7-hydroxy-6-methyl-8-(1-D-ribityl)lumazine site is built by Arg116, Tyr174, and Gln175. Disulfide bonds link Cys120–Cys183 and Cys222–Cys278. An alpha-3 region spans residues 202–293 (EPPLVRVNRK…GVHVVLQVPQ (92 aa)). The 80-residue stretch at 203-282 (PPLVRVNRKE…SNLYSCHVEH (80 aa)) folds into the Ig-like C1-type domain. The segment at 294–302 (ESEAIPLVM) is connecting peptide. A helical transmembrane segment spans residues 303–323 (KAVSGSIVFVIVLAGVGVLVW). The Cytoplasmic portion of the chain corresponds to 324–340 (RRRPREQNGAVYLPTPD).

Belongs to the MHC class I family. As to quaternary structure, heterotrimer that consists of MR1, B2M and metabolite antigen. Major classes of metabolite ligands presented by MR1 include riboflavin-related antigens, pyrimidines and ribityl lumazines, nucleobase adducts and folate derivatives. Forms reversible covalent Schiff base complexes with microbial pyrimidine-based metabolite, which serves as a molecular switch triggering complete folding, stable association with B2M and translocation of the ternary complex from endoplasmic reticulum to the plasma membrane. Alternatively, forms non-Schiff base complexes with ribityl lumazines. On antigen-presenting cells, the ternary complex interacts with TCR on MR1-restricted T cells. Interacts with TAPBP and TAPBPL chaperones in the endoplasmic reticulum. TAPBP associated or not with MHC class I peptide loading complex binds ligand-free MR1 or MR1-B2M complex, providing for stable MR1 pools ready for metabolite antigen processing. TAPBPL interacts with MR1 in a ligand-independent way; this interaction may stabilize MR1 pool and facilitate ligand loading and dissociation. Structurally, MR1-B2M heterodimer adopts a topology similar to classical MHC class I molecules, with alpha-1 and alpha-2 domains of MR1 forming the antigen-binding cleft composed of two alpha-helices resting on a floor of 7-stranded anti-parallel beta-pleated sheet. MR1-B2M heterodimer (via alpha-helices) interacts with TCR (via CDR domains). In terms of processing, N-glycosylated.

Its subcellular location is the cell membrane. The protein localises to the endoplasmic reticulum membrane. It localises to the golgi apparatus membrane. It is found in the early endosome membrane. The protein resides in the late endosome membrane. Antigen-presenting molecule specialized in displaying microbial pyrimidine-based metabolites to alpha-beta T cell receptors (TCR) on innate-type mucosal-associated invariant T (MAIT) cells. In complex with B2M preferentially presents riboflavin-derived metabolites to semi-invariant TCRs on MAIT cells, guiding immune surveillance of the microbial metabolome at mucosal epithelial barriers. Signature pyrimidine-based microbial antigens are generated via non-enzymatic condensation of metabolite intermediates of the riboflavin pathway with by-products arising from other metabolic pathways such as glycolysis. Typical potent antigenic metabolites are 5-(2-oxoethylideneamino)-6-D-ribitylaminouracil (5-OE-RU) and 5-(2-oxopropylideneamino)-6-D-ribitylaminouracil (5-OP-RU), products of condensation of 5-amino-6-D-ribityaminouracil (5-A-RU) with glyoxal or methylglyoxal by-products, respectively. May present microbial antigens to various MAIT cell subsets, providing for unique recognition of diverse microbes, including pathogens that do not synthesize riboflavin. Upon antigen recognition, elicits rapid innate-type MAIT cell activation to eliminate pathogenic microbes by directly killing infected cells. During T cell development, drives thymic selection and post-thymic terminal differentiation of MAIT cells in a process dependent on commensal microflora. Acts as an immune sensor of cancer cell metabolome. May present a tumor-specific or -associated metabolite essential for cancer cell survival to a pan-cancer TCR on a non-MAIT CD8-positive T cell clone, triggering T cell-mediated killing of a wide range of cancer cell types. May present tumor-enriched pyridoxal and pyridoxal 5'-phosphate antigens, enabling preferential recognition of cancer cells. Presents nucleobase carbonyl adducts generated during oxidative stress. Captures M3Ade, a nucleobase adduct composed of one adenine modified by a malondialdehyde trimer, for recognition by MR1-restricted T cell clones expressing a polyclonal TCR repertoire. This chain is Major histocompatibility complex class I-related protein 1, found in Pongo abelii (Sumatran orangutan).